A 356-amino-acid chain; its full sequence is MNTIDLPSLAQATPTIRHDWTREEAAAIYYAPFMDLMFRAATIHRQSFDPNKVQCNQLLNVKTGGCAEDCGYCGQSAHHHTDLPASKLMAPADVIESAKAAKAGGATRYCMGAAWRSPKDRDMAPVIEMVKGVKALGMEACVTLGMLSDDQAKQLADAGLDYYNHNLDTSEEFYPSVVKTRTYGDRLNTLHKVQDAGIKVCCGGILGLGEKPTDRVEMLRTLANLAKHPESVPINLLIPIEGTPISLTATPVDPIAFVRTIALARIMMPLSDVRLAAGRTAMSDEMQTLCFLAGANSIFIGDTLLTTPNPGDNKDRSLFDRLGLEPRDDHGVHEHSSHSHTHDQGHDHGPHGHSHG.

A Radical SAM core domain is found at 51–270 (NKVQCNQLLN…IALARIMMPL (220 aa)). [4Fe-4S] cluster-binding residues include Cys66, Cys70, and Cys73. Residues Cys110, Cys141, Cys201, and Arg274 each contribute to the [2Fe-2S] cluster site. A disordered region spans residues 310–356 (PGDNKDRSLFDRLGLEPRDDHGVHEHSSHSHTHDQGHDHGPHGHSHG). The segment covering 312-350 (DNKDRSLFDRLGLEPRDDHGVHEHSSHSHTHDQGHDHGP) has biased composition (basic and acidic residues).

Belongs to the radical SAM superfamily. Biotin synthase family. As to quaternary structure, homodimer. Requires [4Fe-4S] cluster as cofactor. It depends on [2Fe-2S] cluster as a cofactor.

It catalyses the reaction (4R,5S)-dethiobiotin + (sulfur carrier)-SH + 2 reduced [2Fe-2S]-[ferredoxin] + 2 S-adenosyl-L-methionine = (sulfur carrier)-H + biotin + 2 5'-deoxyadenosine + 2 L-methionine + 2 oxidized [2Fe-2S]-[ferredoxin]. The protein operates within cofactor biosynthesis; biotin biosynthesis; biotin from 7,8-diaminononanoate: step 2/2. Catalyzes the conversion of dethiobiotin (DTB) to biotin by the insertion of a sulfur atom into dethiobiotin via a radical-based mechanism. This is Biotin synthase from Rhodopseudomonas palustris (strain BisB18).